The primary structure comprises 901 residues: MLGLGTLAKKVFGTPNDRKIKATRPVVAQINALEEEFAKLTDEGLKQKTDELRKRALDGESLDALLPEAFANCREAGKRALGLRAFDTQLMGGIFLHQGNISEMKTGEGKTLVATFPAYLNALTGKGVHVVTVNEYLAKRDSEWMGKVFAALGMTTGVIWSGQPDAEKMAAYESDITYATNNELGFDYLRDNMKGELSEVYQKQHNFAIVDEVDSILIDEARTPLIISGPAQDRSDLYVAIDALLPALSDDHFELDEKTRNVTFTDEGNEFLEAQLVARGLLPEGQSLYDPESTTIVHHVNQGLRAHKLFQRDKDYIVRDGEVVLIDEFTGRMMPGRRLSDGLHQAIEAKENAQIQPENVTLASVTFQNYFRLYDKLSGMTGTALTEAEEFAEIYGLGVVEVPTNRPIARTDEDDQVYRTAAEKYGAMIDETKKAHEKGQPVLLGTTSIEKSEMLSQMLTKEGIEHNVLNARQHEREAQIVAEAGRYGAVTIATNMAGRGTDIQLGGNVEMKVLEALAENPEADPVELRAAEEARHAEEKQKVLDAGGLYVMASERHESRRIDNQLRGRSGRQGDPGRTVFYLSLEDDLMRIFGSERLDKVLTTLGMKEGEAIIHPWVNKSLERAQAKVEGRNFDMRKNVLKFDDVMNDQRKVIFNQRREIMATEDLSDVVADMREQVIDDLIDEYMPPKTYADQWDTQGLYAAVIEKLGIDVPVIEWAAEEGVDDDEIRERLIKASGDYMESKAADFGAENMRNIEKQVLLQTIDSKWREHLLKLEHLRSVVGFRGYAQRDPLNEYKTESFQLFEGLLDSLRETVTQQLSRVRMLSEEEQRQMMAQMMAQQNQAEQAAVQAEAVAEAKASGDARPGFVEDDPSTWGNPARNDLCPCGSGKKFKHCHGRLA.

ATP is bound by residues Gln-89, 107–111 (GEGKT), and Asp-502. A disordered region spans residues 856–875 (AEAKASGDARPGFVEDDPST). Cys-885, Cys-887, Cys-896, and His-897 together coordinate Zn(2+).

Belongs to the SecA family. Monomer and homodimer. Part of the essential Sec protein translocation apparatus which comprises SecA, SecYEG and auxiliary proteins SecDF-YajC and YidC. The cofactor is Zn(2+).

It localises to the cell inner membrane. The protein resides in the cytoplasm. It catalyses the reaction ATP + H2O + cellular proteinSide 1 = ADP + phosphate + cellular proteinSide 2.. In terms of biological role, part of the Sec protein translocase complex. Interacts with the SecYEG preprotein conducting channel. Has a central role in coupling the hydrolysis of ATP to the transfer of proteins into and across the cell membrane, serving both as a receptor for the preprotein-SecB complex and as an ATP-driven molecular motor driving the stepwise translocation of polypeptide chains across the membrane. The polypeptide is Protein translocase subunit SecA 1 (Ruegeria pomeroyi (strain ATCC 700808 / DSM 15171 / DSS-3) (Silicibacter pomeroyi)).